We begin with the raw amino-acid sequence, 39 residues long: Photosystem II reaction center protein J (39 aa).

Residues 7–27 traverse the membrane as a helical segment; that stretch reads IPLWLIATVGGTAALTVVGLF.

This sequence belongs to the PsbJ family. PSII is composed of 1 copy each of membrane proteins PsbA, PsbB, PsbC, PsbD, PsbE, PsbF, PsbH, PsbI, PsbJ, PsbK, PsbL, PsbM, PsbT, PsbX, PsbY, PsbZ, Psb30/Ycf12, at least 3 peripheral proteins of the oxygen-evolving complex and a large number of cofactors. It forms dimeric complexes.

It is found in the plastid. The protein localises to the chloroplast thylakoid membrane. In terms of biological role, one of the components of the core complex of photosystem II (PSII). PSII is a light-driven water:plastoquinone oxidoreductase that uses light energy to abstract electrons from H(2)O, generating O(2) and a proton gradient subsequently used for ATP formation. It consists of a core antenna complex that captures photons, and an electron transfer chain that converts photonic excitation into a charge separation. The protein is Photosystem II reaction center protein J of Rhodomonas salina (Cryptomonas salina).